A 282-amino-acid polypeptide reads, in one-letter code: Release factor glutamine methyltransferase (282 aa).

S-adenosyl-L-methionine contacts are provided by residues Gly120–Gly124, Asp143, and Asn189. Asn189–Tyr192 provides a ligand contact to substrate.

The protein belongs to the protein N5-glutamine methyltransferase family. PrmC subfamily.

It carries out the reaction L-glutaminyl-[peptide chain release factor] + S-adenosyl-L-methionine = N(5)-methyl-L-glutaminyl-[peptide chain release factor] + S-adenosyl-L-homocysteine + H(+). Its function is as follows. Methylates the class 1 translation termination release factors RF1/PrfA and RF2/PrfB on the glutamine residue of the universally conserved GGQ motif. In Dictyoglomus turgidum (strain DSM 6724 / Z-1310), this protein is Release factor glutamine methyltransferase.